Consider the following 596-residue polypeptide: Elongation factor 4 (596 aa).

The 183-residue stretch at 2–184 (RNIRNFSIIA…AIVHRIPPPT (183 aa)) folds into the tr-type G domain. GTP is bound by residues 14–19 (DHGKST) and 131–134 (NKID).

This sequence belongs to the TRAFAC class translation factor GTPase superfamily. Classic translation factor GTPase family. LepA subfamily.

The protein resides in the cell inner membrane. It catalyses the reaction GTP + H2O = GDP + phosphate + H(+). Its function is as follows. Required for accurate and efficient protein synthesis under certain stress conditions. May act as a fidelity factor of the translation reaction, by catalyzing a one-codon backward translocation of tRNAs on improperly translocated ribosomes. Back-translocation proceeds from a post-translocation (POST) complex to a pre-translocation (PRE) complex, thus giving elongation factor G a second chance to translocate the tRNAs correctly. Binds to ribosomes in a GTP-dependent manner. This is Elongation factor 4 from Xanthomonas oryzae pv. oryzae (strain PXO99A).